An 840-amino-acid chain; its full sequence is Urease (840 aa).

The Urease domain maps to 402-840 (GAIDCHVHYI…VPLSRNYFLF (439 aa)). 3 residues coordinate Ni(2+): H407, H409, and K490. An N6-carboxylysine modification is found at K490. Position 492 (H492) interacts with substrate. Ni(2+) is bound by residues H519 and H545. H593 serves as the catalytic Proton donor. Ni(2+) is bound at residue D633.

The protein in the C-terminal section; belongs to the metallo-dependent hydrolases superfamily. Urease alpha subunit family. Homohexamer. Other oligomeric forms may exist depending on pH and presence of salts. The cofactor is Ni cation. Carboxylation allows a single lysine to coordinate two nickel ions.

It carries out the reaction urea + 2 H2O + H(+) = hydrogencarbonate + 2 NH4(+). The protein operates within nitrogen metabolism; urea degradation; CO(2) and NH(3) from urea (urease route): step 1/1. With respect to regulation, P-hydroxymercuribenzoate irreversibly abolishes ureolytic activity, but does not inhibit the ability to activate platelets. Also inhibited by acetohydroxamic acid (AHA), a chelator of Ni2+ and Zn2+ ions. Functionally, urea hydrolase involved in nitrogen recycling from ureide, purine, and arginine catabolism. Is known to be highly toxic and lethal when given by intravenous route, producing convulsions and other signs of central nervous system intoxication associated with the high levels of ammonia formed in the blood of mice and rabbits. Is neurotoxic in mammals, when directly injected into hippocampus. It may induce seizures by acting at a neuronal network level, thereby disturbing electroencephalographic rhythms and causing metabolic alterations in key areas related to epileptogenesis and to neurogenic pulmonary edema. It increases calcium influx and neuronal firing rate in the hippocampus. Is able to insert itself into lipid bilayers, altering physicochemical properties of artificial membranes, and forming cation-selective ion channels. In vitro, has the ability to induce platelet aggregation, platelet granules secretion and release of ATP. In contrast to canatoxin, another urease from C.ensiformis, is not lethal to mice when intraperitoneally injected. The sequence is that of Urease from Canavalia ensiformis (Jack bean).